Here is a 270-residue protein sequence, read N- to C-terminus: 3-methyl-2-oxobutanoate hydroxymethyltransferase (270 aa).

Positions 50 and 89 each coordinate Mg(2+). 3-methyl-2-oxobutanoate-binding positions include 50–51, D89, and K118; that span reads DS. E120 contributes to the Mg(2+) binding site. E187 acts as the Proton acceptor in catalysis.

This sequence belongs to the PanB family. In terms of assembly, homodecamer; pentamer of dimers. It depends on Mg(2+) as a cofactor.

The protein resides in the cytoplasm. It catalyses the reaction 3-methyl-2-oxobutanoate + (6R)-5,10-methylene-5,6,7,8-tetrahydrofolate + H2O = 2-dehydropantoate + (6S)-5,6,7,8-tetrahydrofolate. The protein operates within cofactor biosynthesis; (R)-pantothenate biosynthesis; (R)-pantoate from 3-methyl-2-oxobutanoate: step 1/2. Functionally, catalyzes the reversible reaction in which hydroxymethyl group from 5,10-methylenetetrahydrofolate is transferred onto alpha-ketoisovalerate to form ketopantoate. This is 3-methyl-2-oxobutanoate hydroxymethyltransferase from Helicobacter pylori (strain HPAG1).